The chain runs to 130 residues: Large ribosomal subunit protein bL17 (130 aa).

It belongs to the bacterial ribosomal protein bL17 family. In terms of assembly, part of the 50S ribosomal subunit. Contacts protein L32.

In Shewanella loihica (strain ATCC BAA-1088 / PV-4), this protein is Large ribosomal subunit protein bL17.